The primary structure comprises 191 residues: Octanoyltransferase (191 aa).

Positions 10–185 (ENSHDEIWLV…NILALLNNPP (176 aa)) constitute a BPL/LPL catalytic domain. Substrate contacts are provided by residues 49–56 (RGGQVTYH), 116–118 (SLG), and 129–131 (GLA). The active-site Acyl-thioester intermediate is Cys-147.

Belongs to the LipB family.

It localises to the cytoplasm. It catalyses the reaction octanoyl-[ACP] + L-lysyl-[protein] = N(6)-octanoyl-L-lysyl-[protein] + holo-[ACP] + H(+). Its pathway is protein modification; protein lipoylation via endogenous pathway; protein N(6)-(lipoyl)lysine from octanoyl-[acyl-carrier-protein]: step 1/2. Catalyzes the transfer of endogenously produced octanoic acid from octanoyl-acyl-carrier-protein onto the lipoyl domains of lipoate-dependent enzymes. Lipoyl-ACP can also act as a substrate although octanoyl-ACP is likely to be the physiological substrate. The sequence is that of Octanoyltransferase from Salmonella choleraesuis (strain SC-B67).